We begin with the raw amino-acid sequence, 385 residues long: AA13 family lytic polysaccharide monooxygenase NCU08746 (385 aa).

The N-terminal stretch at 1-18 is a signal peptide; the sequence is MKFSIISVALASAITVDA. His-19 provides a ligand contact to Cu(2+). Position 19 is a methylhistidine (His-19). A Chitin-binding type-4 domain is found at 19-248; it reads HGYLTIPFSR…AQVYLSCADI (230 aa). A disulfide bridge links Cys-40 with Cys-43. Asn-54 is a glycosylation site (N-linked (GlcNAc...) asparagine). Intrachain disulfides connect Cys-66–Cys-245, Cys-102–Cys-203, Cys-118–Cys-145, Cys-153–Cys-161, Cys-167–Cys-173, and Cys-181–Cys-192. His-109 is a Cu(2+) binding site. Tyr-242 contacts Cu(2+). One can recognise a CBM20 domain in the interval 278 to 385; the sequence is CTPAATVAVT…ESVAVESSWK (108 aa). An N-linked (GlcNAc...) asparagine glycan is attached at Asn-365.

It belongs to the polysaccharide monooxygenase AA13 family. The cofactor is Cu(2+).

Its subcellular location is the secreted. The catalysed reaction is starch + reduced acceptor + O2 = D-glucono-1,5-lactone-terminated malto-oligosaccharides + short-chain malto-oligosaccharides + acceptor + H2O.. Functionally, starch-active lytic polysaccharide monooxygenase that oxidizes the C1 position of starch substrates, but not in cellulose or chitin. Catalysis by LPMOs requires the reduction of the active-site copper from Cu(II) to Cu(I) by a reducing agent and H(2)O(2) or O(2) as a cosubstrate. This is AA13 family lytic polysaccharide monooxygenase NCU08746 from Neurospora crassa (strain ATCC 24698 / 74-OR23-1A / CBS 708.71 / DSM 1257 / FGSC 987).